We begin with the raw amino-acid sequence, 116 residues long: Galanin-like peptide (116 aa).

An N-terminal signal peptide occupies residues 1 to 24 (MAPPSVPLVLLLVLLLSLAETPAS). Positions 87–116 (NVMETFAKPEIGDLGMLSMKIPKEEDVLKS) are excised as a propeptide.

It belongs to the galanin family. As to expression, isoform 2 is found in ganglia of ganglioneuroma and ganglioneuroblastoma, as well as in differentiated tumor cells of neuroblastoma tissues. Not found in undifferentiated neuroblasts. Isoform 2 is found in the skin, in pericytes covering microvascular arterioles and venules on their abluminal surfaces. In larger vessels, isoform 2 is expressed in layers of smooth muscle cells. Isoform 2 is not detected in endothelial cells.

It localises to the secreted. In terms of biological role, hypothalamic neuropeptide which binds to the G-protein-coupled galanin receptors (GALR1, GALR2 and GALR3). Involved in a large number of putative physiological functions in CNS homeostatic processes, including the regulation of gonadotropin-releasing hormone secretion. Its function is as follows. Exhibits potent and dose-dependent vasoconstrictor and anti-edema activity in the cutaneous microvasculature, a physiologic effects which does not appear to be mediated via GALR1 or GALR2. Exhibits antimicrobial activity against Gram-negative bacterias, inducing bacterial membrane blebbing. In Homo sapiens (Human), this protein is Galanin-like peptide (GALP).